The following is a 483-amino-acid chain: Putative (R)-citramalate synthase CimA (483 aa).

In terms of domain architecture, Pyruvate carboxyltransferase spans Met-1–Tyr-245.

The protein belongs to the alpha-IPM synthase/homocitrate synthase family. Homodimer.

The catalysed reaction is pyruvate + acetyl-CoA + H2O = (3R)-citramalate + CoA + H(+). The protein operates within amino-acid biosynthesis; L-isoleucine biosynthesis; 2-oxobutanoate from pyruvate: step 1/3. Its function is as follows. Catalyzes the condensation of pyruvate and acetyl-coenzyme A to form (R)-citramalate. This is Putative (R)-citramalate synthase CimA from Methanosarcina mazei (strain ATCC BAA-159 / DSM 3647 / Goe1 / Go1 / JCM 11833 / OCM 88) (Methanosarcina frisia).